A 164-amino-acid chain; its full sequence is Interferon gamma (164 aa).

Residues Met-1–Gly-19 form the signal peptide. Residues Asn-42 and Asn-61 are each glycosylated (N-linked (GlcNAc...) asparagine).

The protein belongs to the type II (or gamma) interferon family. In terms of assembly, homodimer.

Its subcellular location is the secreted. Functionally, produced by lymphocytes activated by specific antigens or mitogens. IFN-gamma, in addition to having antiviral activity, has important immunoregulatory functions. It is a potent activator of macrophages, it has antiproliferative effects on transformed cells and it can potentiate the antiviral and antitumor effects of the type I interferons. The chain is Interferon gamma (IFNG) from Gallus gallus (Chicken).